Consider the following 190-residue polypeptide: Pyridoxal 5'-phosphate synthase subunit PdxT (190 aa).

46–48 lines the L-glutamine pocket; sequence GES. Cysteine 78 acts as the Nucleophile in catalysis. Residues arginine 105 and 133–134 contribute to the L-glutamine site; that span reads IR. Residues histidine 169 and glutamate 171 each act as charge relay system in the active site.

This sequence belongs to the glutaminase PdxT/SNO family. In the presence of PdxS, forms a dodecamer of heterodimers. Only shows activity in the heterodimer.

The catalysed reaction is aldehydo-D-ribose 5-phosphate + D-glyceraldehyde 3-phosphate + L-glutamine = pyridoxal 5'-phosphate + L-glutamate + phosphate + 3 H2O + H(+). It catalyses the reaction L-glutamine + H2O = L-glutamate + NH4(+). The protein operates within cofactor biosynthesis; pyridoxal 5'-phosphate biosynthesis. Its function is as follows. Catalyzes the hydrolysis of glutamine to glutamate and ammonia as part of the biosynthesis of pyridoxal 5'-phosphate. The resulting ammonia molecule is channeled to the active site of PdxS. The protein is Pyridoxal 5'-phosphate synthase subunit PdxT of Niallia circulans (Bacillus circulans).